We begin with the raw amino-acid sequence, 265 residues long: Hydroxyethylthiazole kinase (265 aa).

Residue methionine 50 participates in substrate binding. ATP-binding residues include arginine 125 and threonine 171. Glycine 198 is a substrate binding site.

This sequence belongs to the Thz kinase family. Requires Mg(2+) as cofactor.

The catalysed reaction is 5-(2-hydroxyethyl)-4-methylthiazole + ATP = 4-methyl-5-(2-phosphooxyethyl)-thiazole + ADP + H(+). Its pathway is cofactor biosynthesis; thiamine diphosphate biosynthesis; 4-methyl-5-(2-phosphoethyl)-thiazole from 5-(2-hydroxyethyl)-4-methylthiazole: step 1/1. In terms of biological role, catalyzes the phosphorylation of the hydroxyl group of 4-methyl-5-beta-hydroxyethylthiazole (THZ). This is Hydroxyethylthiazole kinase from Salmonella choleraesuis (strain SC-B67).